The sequence spans 279 residues: 4-hydroxy-3-methylbut-2-enyl diphosphate reductase (279 aa).

Cysteine 12 is a [4Fe-4S] cluster binding site. The (2E)-4-hydroxy-3-methylbut-2-enyl diphosphate site is built by histidine 40 and histidine 70. Dimethylallyl diphosphate is bound by residues histidine 40 and histidine 70. Isopentenyl diphosphate is bound by residues histidine 40 and histidine 70. Residue cysteine 92 coordinates [4Fe-4S] cluster. Position 119 (histidine 119) interacts with (2E)-4-hydroxy-3-methylbut-2-enyl diphosphate. A dimethylallyl diphosphate-binding site is contributed by histidine 119. Isopentenyl diphosphate is bound at residue histidine 119. The active-site Proton donor is the glutamate 121. A (2E)-4-hydroxy-3-methylbut-2-enyl diphosphate-binding site is contributed by threonine 151. Residue cysteine 181 participates in [4Fe-4S] cluster binding. (2E)-4-hydroxy-3-methylbut-2-enyl diphosphate contacts are provided by serine 209, serine 210, asparagine 211, and serine 251. The dimethylallyl diphosphate site is built by serine 209, serine 210, asparagine 211, and serine 251. The isopentenyl diphosphate site is built by serine 209, serine 210, asparagine 211, and serine 251.

This sequence belongs to the IspH family. [4Fe-4S] cluster serves as cofactor.

The catalysed reaction is isopentenyl diphosphate + 2 oxidized [2Fe-2S]-[ferredoxin] + H2O = (2E)-4-hydroxy-3-methylbut-2-enyl diphosphate + 2 reduced [2Fe-2S]-[ferredoxin] + 2 H(+). The enzyme catalyses dimethylallyl diphosphate + 2 oxidized [2Fe-2S]-[ferredoxin] + H2O = (2E)-4-hydroxy-3-methylbut-2-enyl diphosphate + 2 reduced [2Fe-2S]-[ferredoxin] + 2 H(+). The protein operates within isoprenoid biosynthesis; dimethylallyl diphosphate biosynthesis; dimethylallyl diphosphate from (2E)-4-hydroxy-3-methylbutenyl diphosphate: step 1/1. It participates in isoprenoid biosynthesis; isopentenyl diphosphate biosynthesis via DXP pathway; isopentenyl diphosphate from 1-deoxy-D-xylulose 5-phosphate: step 6/6. Its function is as follows. Catalyzes the conversion of 1-hydroxy-2-methyl-2-(E)-butenyl 4-diphosphate (HMBPP) into a mixture of isopentenyl diphosphate (IPP) and dimethylallyl diphosphate (DMAPP). Acts in the terminal step of the DOXP/MEP pathway for isoprenoid precursor biosynthesis. The sequence is that of 4-hydroxy-3-methylbut-2-enyl diphosphate reductase from Thermotoga neapolitana (strain ATCC 49049 / DSM 4359 / NBRC 107923 / NS-E).